The sequence spans 218 residues: MAEISRIQYEMEYTEGISQRMRVPEKLKVAPPNADLEQGFQEGVSNASVIMQVPERIVVAGNNEDIPFSRPADLDLIQSTPFKPLALKTPPRVLTLSERPLDFLDLERPAPTPQNEEIRAVGRLKRERSMSENAVRQNGQLVKTDSMYGISNIDAMIEGTSEDMTVVDAASLRRQIIKLNRRLQLLEEENKERAKREMVMYSITVAFWLLNSWLWFRR.

Residues 1 to 198 (MAEISRIQYE…ENKERAKREM (198 aa)) are Cytoplasmic-facing. Residue threonine 89 is modified to Phosphothreonine. Phosphoserine occurs at positions 129, 131, 146, and 171. The stretch at 167–198 (VDAASLRRQIIKLNRRLQLLEEENKERAKREM) forms a coiled coil. Residues 199–216 (VMYSITVAFWLLNSWLWF) traverse the membrane as a helical; Anchor for type IV membrane protein segment. Residues 217–218 (RR) lie on the Mitochondrial intermembrane side of the membrane.

The protein belongs to the Tango11 family. Homodimer. Interacts with DNM1L. Interacts with C11orf65/MFI; the interaction inhibits MFF interaction with DNM1L.

It localises to the mitochondrion outer membrane. Its subcellular location is the peroxisome. The protein localises to the cytoplasmic vesicle. It is found in the secretory vesicle. The protein resides in the synaptic vesicle. In terms of biological role, plays a role in mitochondrial and peroxisomal fission. Promotes the recruitment and association of the fission mediator dynamin-related protein 1 (DNM1L) to the mitochondrial surface. May be involved in regulation of synaptic vesicle membrane dynamics by recruitment of DNM1L to clathrin-containing vesicles. This Bos taurus (Bovine) protein is Mitochondrial fission factor (MFF).